Reading from the N-terminus, the 488-residue chain is RuvB-like helicase 1 (488 aa).

Over residues 1–11 (MATANTSSGSM) the composition is skewed to polar residues. Positions 1 to 29 (MATANTSSGSMNGVGPVTMDSSTSGASRE) are disordered. 87–94 (GGPGTGKT) is an ATP binding site.

Belongs to the RuvB family. In terms of assembly, may form heterododecamers with RVB2. Component of the SWR1 chromatin remodeling complex, the INO80 chromatin remodeling complex, and of the R2TP complex.

It localises to the nucleus. It catalyses the reaction ATP + H2O = ADP + phosphate + H(+). Its function is as follows. DNA helicase which participates in several chromatin remodeling complexes, including the SWR1 and the INO80 complexes. The SWR1 complex mediates the ATP-dependent exchange of histone H2A for the H2A variant HZT1 leading to transcriptional regulation of selected genes by chromatin remodeling. The INO80 complex remodels chromatin by shifting nucleosomes and is involved in DNA repair. Also involved in pre-rRNA processing. The sequence is that of RuvB-like helicase 1 (RVB1) from Mycosarcoma maydis (Corn smut fungus).